Consider the following 205-residue polypeptide: Variable small protein 11 (205 aa).

The N-terminal stretch at 1–18 (MRKRISAIIMTLFMVFMS) is a signal peptide. Residue Cys-19 is the site of N-palmitoyl cysteine attachment. A lipid anchor (S-diacylglycerol cysteine) is attached at Cys-19.

This sequence belongs to the variable small protein (Vsp) family.

It localises to the cell outer membrane. Functionally, the Vlp and Vsp proteins are antigenically distinct proteins, only one vlp or vsp gene is transcriptionally active at any one time. Switching between these genes is a mechanism of host immune response evasion. This is Variable small protein 11 from Borrelia hermsii.